We begin with the raw amino-acid sequence, 199 residues long: Large ribosomal subunit protein bL9 (199 aa).

The interval 169–199 is disordered; sequence TGGFTEEYDPNAEPGEIPTELLEGGEEAAEA.

Belongs to the bacterial ribosomal protein bL9 family.

Its function is as follows. Binds to the 23S rRNA. The sequence is that of Large ribosomal subunit protein bL9 from Novosphingobium aromaticivorans (strain ATCC 700278 / DSM 12444 / CCUG 56034 / CIP 105152 / NBRC 16084 / F199).